The primary structure comprises 821 residues: Elongator complex protein 2 (821 aa).

WD repeat units follow at residues 56 to 100, 105 to 152, 160 to 200, 205 to 246, 280 to 328, 338 to 377, 385 to 424, 435 to 473, 563 to 607, 610 to 649, 665 to 704, 716 to 760, and 773 to 821; these read GHTA…VLKS, GHEG…VKCL, GFVL…FQKM, GHED…TSLE, GHEN…GVWL, GNTL…PRQW, GHFD…NQSQ, IHGY…VENF, GHGY…QVQS, YHTL…SAEF, VHSR…YNPM, DVGS…QETK, and SHTL…RCAL.

Belongs to the WD repeat ELP2 family. Component of the elongator complex which consists of ELP1, ELP2, ELP3, ELP4, ELP5 and ELP6. Interacts with STAT3 and JAKs.

Its subcellular location is the cytoplasm. The protein resides in the nucleus. Its pathway is tRNA modification; 5-methoxycarbonylmethyl-2-thiouridine-tRNA biosynthesis. Functionally, component of the elongator complex which is required for multiple tRNA modifications, including mcm5U (5-methoxycarbonylmethyl uridine), mcm5s2U (5-methoxycarbonylmethyl-2-thiouridine), and ncm5U (5-carbamoylmethyl uridine). The elongator complex catalyzes the formation of carboxymethyluridine in the wobble base at position 34 in tRNAs. This is Elongator complex protein 2 (Elp2) from Rattus norvegicus (Rat).